A 218-amino-acid chain; its full sequence is Tubulin polymerization-promoting protein (218 aa).

A disordered region spans residues 1-46; that stretch reads MADSKAKPAKAANKTPPKSPGDPARAAKRLSLESEGANEGATAAPE. Residues 1–115 form a mediates interaction with LIMK1 region; sequence MADSKAKPAK…SCRTITFEQF (115 aa). Residue Thr-15 is modified to Phosphothreonine. A phosphoserine mark is found at Ser-19, Ser-31, and Ser-34. At Thr-42 the chain carries Phosphothreonine. The Zn(2+) site is built by His-60, His-71, Cys-79, and Cys-82. Thr-91 carries the phosphothreonine modification. The residue at position 106 (Ser-106) is a Phosphoserine. The O-linked (GlcNAc) serine glycan is linked to Ser-151. Ser-158 and Ser-159 each carry phosphoserine. Positions 166-192 are disordered; the sequence is TDTSKFTGSHKERFDQSGKGKGKAGRV. A compositionally biased stretch (basic and acidic residues) spans 174–183; sequence SHKERFDQSG.

It belongs to the TPPP family. Homodimer. Binds tubulin; binding is inhibited by GTP. Interacts with MAPK1. Interacts with GAPDH; the interaction is direct. Interacts with LIMK1 (via the PDZ domain); the interaction is direct. Interacts with LIMK2. Interacts with HDAC6; thereby inhibiting the tubulin deacetylase activity of HDAC6. Interacts with aggregated SNCA; may have a pro-aggregatory role in synucleinopathies. Interacts with DYNLL1. Interacts (via C-terminus) with S100A2, S100A6 and S100B; these interactions inhibit TPPP dimerization. Requires Mg(2+) as cofactor. Post-translationally, phosphorylated by LIMK1 on serine residues; phosphorylation may alter the tubulin polymerization activity. Phosphorylation by LIMK2, but not LIMK1, regulates astral microtubule organization at early stage of mitosis. Phosphorylation by ROCK1 at Ser-31, Ser-106 and Ser-158 inhibits interaction with HDAC6, resulting in decreased acetylation of tubulin, increased cell motility and entry into S-phase. Phosphorylation by CDK1 inhibits the microtubule polymerizing activity. Degraded by the proteasome; zinc-binding inhibits degradation by the proteasome. As to expression, widely expressed with higher expression in brain (at protein level).

The protein localises to the golgi outpost. The protein resides in the cytoplasm. It is found in the cytoskeleton. It localises to the microtubule organizing center. Its subcellular location is the nucleus. The protein localises to the spindle. It carries out the reaction GTP + H2O = GDP + phosphate + H(+). In terms of biological role, regulator of microtubule dynamics that plays a key role in myelination by promoting elongation of the myelin sheath. Acts as a microtubule nucleation factor in oligodendrocytes: specifically localizes to the postsynaptic Golgi apparatus region, also named Golgi outpost, and promotes microtubule nucleation, an important step for elongation of the myelin sheath. Required for both uniform polarized growth of distal microtubules as well as directing the branching of proximal processes. Shows magnesium-dependent GTPase activity; the role of the GTPase activity is unclear. In addition to microtubule nucleation activity, also involved in microtubule bundling and stabilization of existing microtubules, thereby maintaining the integrity of the microtubule network. Regulates microtubule dynamics by promoting tubulin acetylation: acts by inhibiting the tubulin deacetylase activity of HDAC6. Also regulates cell migration: phosphorylation by ROCK1 inhibits interaction with HDAC6, resulting in decreased acetylation of tubulin and increased cell motility. Plays a role in cell proliferation by regulating the G1/S-phase transition. Involved in astral microtubule organization and mitotic spindle orientation during early stage of mitosis; this process is regulated by phosphorylation by LIMK2. The polypeptide is Tubulin polymerization-promoting protein (Mus musculus (Mouse)).